The primary structure comprises 784 residues: LPS-assembly protein LptD (784 aa).

Residues 1–24 (MKKRIPTLLATMIATALYSQQGLA) form the signal peptide. 2 cysteine pairs are disulfide-bonded: cysteine 31–cysteine 724 and cysteine 173–cysteine 725.

Belongs to the LptD family. As to quaternary structure, component of the lipopolysaccharide transport and assembly complex. Interacts with LptE and LptA. Post-translationally, contains two intramolecular disulfide bonds.

It localises to the cell outer membrane. Its function is as follows. Together with LptE, is involved in the assembly of lipopolysaccharide (LPS) at the surface of the outer membrane. The sequence is that of LPS-assembly protein LptD from Escherichia coli O157:H7.